The primary structure comprises 231 residues: Large ribosomal subunit protein uL1 (231 aa).

This sequence belongs to the universal ribosomal protein uL1 family. Part of the 50S ribosomal subunit.

Functionally, binds directly to 23S rRNA. The L1 stalk is quite mobile in the ribosome, and is involved in E site tRNA release. In terms of biological role, protein L1 is also a translational repressor protein, it controls the translation of the L11 operon by binding to its mRNA. This chain is Large ribosomal subunit protein uL1, found in Nitrosomonas eutropha (strain DSM 101675 / C91 / Nm57).